Reading from the N-terminus, the 612-residue chain is Dihydroxy-acid dehydratase (612 aa).

Residue Asp81 participates in Mg(2+) binding. Cys122 contributes to the [2Fe-2S] cluster binding site. Residues Asp123 and Lys124 each coordinate Mg(2+). Residue Lys124 is modified to N6-carboxylysine. Cys195 provides a ligand contact to [2Fe-2S] cluster. Glu491 serves as a coordination point for Mg(2+). Ser517 acts as the Proton acceptor in catalysis.

Belongs to the IlvD/Edd family. As to quaternary structure, homodimer. The cofactor is [2Fe-2S] cluster. It depends on Mg(2+) as a cofactor.

It catalyses the reaction (2R)-2,3-dihydroxy-3-methylbutanoate = 3-methyl-2-oxobutanoate + H2O. It carries out the reaction (2R,3R)-2,3-dihydroxy-3-methylpentanoate = (S)-3-methyl-2-oxopentanoate + H2O. The protein operates within amino-acid biosynthesis; L-isoleucine biosynthesis; L-isoleucine from 2-oxobutanoate: step 3/4. It functions in the pathway amino-acid biosynthesis; L-valine biosynthesis; L-valine from pyruvate: step 3/4. In terms of biological role, functions in the biosynthesis of branched-chain amino acids. Catalyzes the dehydration of (2R,3R)-2,3-dihydroxy-3-methylpentanoate (2,3-dihydroxy-3-methylvalerate) into 2-oxo-3-methylpentanoate (2-oxo-3-methylvalerate) and of (2R)-2,3-dihydroxy-3-methylbutanoate (2,3-dihydroxyisovalerate) into 2-oxo-3-methylbutanoate (2-oxoisovalerate), the penultimate precursor to L-isoleucine and L-valine, respectively. The protein is Dihydroxy-acid dehydratase of Haemophilus influenzae (strain PittEE).